We begin with the raw amino-acid sequence, 104 residues long: Large ribosomal subunit protein uL24 (104 aa).

Belongs to the universal ribosomal protein uL24 family. As to quaternary structure, part of the 50S ribosomal subunit.

In terms of biological role, one of two assembly initiator proteins, it binds directly to the 5'-end of the 23S rRNA, where it nucleates assembly of the 50S subunit. Its function is as follows. One of the proteins that surrounds the polypeptide exit tunnel on the outside of the subunit. The protein is Large ribosomal subunit protein uL24 of Serratia proteamaculans (strain 568).